Consider the following 281-residue polypeptide: 2-C-methyl-D-erythritol 4-phosphate cytidylyltransferase (281 aa).

It belongs to the IspD/TarI cytidylyltransferase family. IspD subfamily.

It carries out the reaction 2-C-methyl-D-erythritol 4-phosphate + CTP + H(+) = 4-CDP-2-C-methyl-D-erythritol + diphosphate. The protein operates within isoprenoid biosynthesis; isopentenyl diphosphate biosynthesis via DXP pathway; isopentenyl diphosphate from 1-deoxy-D-xylulose 5-phosphate: step 2/6. In terms of biological role, catalyzes the formation of 4-diphosphocytidyl-2-C-methyl-D-erythritol from CTP and 2-C-methyl-D-erythritol 4-phosphate (MEP). The polypeptide is 2-C-methyl-D-erythritol 4-phosphate cytidylyltransferase (Psychrobacter arcticus (strain DSM 17307 / VKM B-2377 / 273-4)).